Here is a 651-residue protein sequence, read N- to C-terminus: Acetyl-coenzyme A synthetase (651 aa).

CoA contacts are provided by residues 193 to 196 and Thr-312; that span reads RRGK. ATP contacts are provided by residues 388–390, 412–417, Asp-501, and Arg-516; these read GEP and DTWWQT. Ser-524 serves as a coordination point for CoA. Residues Val-538, His-540, and Val-543 each coordinate Mg(2+). Position 610 is an N6-acetyllysine (Lys-610).

This sequence belongs to the ATP-dependent AMP-binding enzyme family. Requires Mg(2+) as cofactor. In terms of processing, acetylated. Deacetylation by the SIR2-homolog deacetylase activates the enzyme.

It carries out the reaction acetate + ATP + CoA = acetyl-CoA + AMP + diphosphate. Functionally, catalyzes the conversion of acetate into acetyl-CoA (AcCoA), an essential intermediate at the junction of anabolic and catabolic pathways. AcsA undergoes a two-step reaction. In the first half reaction, AcsA combines acetate with ATP to form acetyl-adenylate (AcAMP) intermediate. In the second half reaction, it can then transfer the acetyl group from AcAMP to the sulfhydryl group of CoA, forming the product AcCoA. The chain is Acetyl-coenzyme A synthetase from Streptomyces coelicolor (strain ATCC BAA-471 / A3(2) / M145).